The primary structure comprises 534 residues: Coiled-coil domain-containing protein 183 (534 aa).

Coiled coils occupy residues 10-54 (EAQI…NLRR), 136-209 (DATK…DMTV), and 321-406 (RFLA…LLVI).

In Mus musculus (Mouse), this protein is Coiled-coil domain-containing protein 183 (Ccdc183).